Reading from the N-terminus, the 488-residue chain is Protein nucleotidyltransferase YdiU (488 aa).

Positions 91, 93, 94, 114, 126, 127, 177, and 184 each coordinate ATP. The interval 108 to 127 is disordered; that stretch reads RFDIQLKGSGPTPYSRRGDG. Asp-253 serves as the catalytic Proton acceptor. Asn-254 and Asp-263 together coordinate Mg(2+). Asp-263 provides a ligand contact to ATP.

Belongs to the SELO family. Mg(2+) serves as cofactor. The cofactor is Mn(2+).

The catalysed reaction is L-seryl-[protein] + ATP = 3-O-(5'-adenylyl)-L-seryl-[protein] + diphosphate. It carries out the reaction L-threonyl-[protein] + ATP = 3-O-(5'-adenylyl)-L-threonyl-[protein] + diphosphate. The enzyme catalyses L-tyrosyl-[protein] + ATP = O-(5'-adenylyl)-L-tyrosyl-[protein] + diphosphate. It catalyses the reaction L-histidyl-[protein] + UTP = N(tele)-(5'-uridylyl)-L-histidyl-[protein] + diphosphate. The catalysed reaction is L-seryl-[protein] + UTP = O-(5'-uridylyl)-L-seryl-[protein] + diphosphate. It carries out the reaction L-tyrosyl-[protein] + UTP = O-(5'-uridylyl)-L-tyrosyl-[protein] + diphosphate. Nucleotidyltransferase involved in the post-translational modification of proteins. It can catalyze the addition of adenosine monophosphate (AMP) or uridine monophosphate (UMP) to a protein, resulting in modifications known as AMPylation and UMPylation. The sequence is that of Protein nucleotidyltransferase YdiU from Bacillus cereus (strain AH820).